The sequence spans 246 residues: Complement C1q tumor necrosis factor-related protein 3 (246 aa).

The signal sequence occupies residues 1 to 22 (MLGRQRIWWHLLPLLFLPFCLC). In terms of domain architecture, Collagen-like spans 51–113 (GYQGPPGPPG…KGEKGYPGVP (63 aa)). Residues 53 to 112 (QGPPGPPGPPGIPGNHGNNGNNGATGHEGAKGEKGDKGDLGPRGERGQHGPKGEKGYPGV) form a disordered region. Residues 55 to 64 (PPGPPGPPGI) show a composition bias toward pro residues. The span at 65 to 74 (PGNHGNNGNN) shows a compositional bias: low complexity. A compositionally biased stretch (basic and acidic residues) spans 80–107 (EGAKGEKGDKGDLGPRGERGQHGPKGEK). A C1q domain is found at 113-246 (PPELQIAFMA…FAGFLLFETK (134 aa)).

The protein localises to the secreted. The protein is Complement C1q tumor necrosis factor-related protein 3 (C1qtnf3) of Mus musculus (Mouse).